Here is a 628-residue protein sequence, read N- to C-terminus: F-box only protein 21 (628 aa).

The 57-residue stretch at 28 to 84 (SCLVNLPGEVLEYILCCGSLTAADIGRVSSTCRRLRELCQSSGKVWKEQFRVRWPSL) folds into the F-box domain.

As to quaternary structure, directly interacts with SKP1 and CUL1.

In terms of biological role, substrate-recognition component of the SCF (SKP1-CUL1-F-box protein)-type E3 ubiquitin ligase complex. This Homo sapiens (Human) protein is F-box only protein 21 (FBXO21).